A 701-amino-acid chain; its full sequence is MMIPSGECTYAGRKRRKPIQKRRLTMGTEKSNPSKRHRDRLNTELDHLASLLPFSPDIISKLDKLSVLRLSVSYLRVKSFFQALQETCVWSAPALSPEDHSSRGFPVQEGRLLLESLNGFALVVSAEGMIFYASATIVDYLGFHQTDVMHQNIYDYIHVDDRQDFCRQLHWAMDPPQVVFGQSPHADTDNTVLGKLLRAQEGGKGLPSEYSAFLTRCFICRVRCLLDSTSGFLTMQFQGKLKFLFGQKKKTPSGTALPPRLSLFCIVAPVLPSVTEMKMKSAFLKAKHRADIVVTMDSRAKAVTSLCESELHPKLNYLAGRSNGENVISLFRGQTDRSHWTRALARSSCLCLRGGPDLLDPKGTSGDREEDDQKHILRRSPGARGQREMHKYSYGLETPVHLRHLDWSTEQRSQEGTTKLTRQPSKSEPSTCLVPHGSCVPYPGSQGMFSASNMASFRESLDHPTGTYCSQMNRPLPDIHQGQVDPSTCHIPQGSLGSRIPLSGMQCFTARGFSTEDAKLPSLPVNIGTPCNPVLSLEVPIKMENESGSQDIVEASTTSCVWLGTGDMTRRHLVGFPARMHLKTEPDYRQQVCTPHRGHGILGTNPHSRDTVGSCREHAPLYSAHCTCLSPEPPHHLFMCSHSESQHPSLDQDCRAPIVKREPLDSPSWAAPGHVTVPRMFPKNASITVIPSKGSDGIFLP.

The tract at residues 1 to 38 is disordered; it reads MMIPSGECTYAGRKRRKPIQKRRLTMGTEKSNPSKRHR. Residues 12–24 show a composition bias toward basic residues; that stretch reads GRKRRKPIQKRRL. One can recognise a bHLH domain in the interval 25–78; the sequence is TMGTEKSNPSKRHRDRLNTELDHLASLLPFSPDIISKLDKLSVLRLSVSYLRVK. One can recognise a PAS domain in the interval 106–176; sequence PVQEGRLLLE…RQLHWAMDPP (71 aa). 2 disordered regions span residues 360 to 389 and 409 to 436; these read DPKG…QREM and TEQR…LVPH. The segment covering 365–375 has biased composition (basic and acidic residues); it reads SGDREEDDQKH. A compositionally biased stretch (polar residues) spans 414–430; that stretch reads QEGTTKLTRQPSKSEPS. The segment at 555–701 is needed for transcriptional repression; it reads ASTTSCVWLG…SKGSDGIFLP (147 aa). Glycyl lysine isopeptide (Lys-Gly) (interchain with G-Cter in SUMO2) cross-links involve residues lysine 583 and lysine 660.

As to quaternary structure, interacts with ARNT, ANKRA2, HDAC4 and HDAC5. Interacts with ARNT; forms a heterodimer with ARNT. As to expression, highly expressed in testis and weakly expressed in heart and liver. Highly expressed in small intestine and cecum in a male-dominant sexual dimorphic fashion.

The protein localises to the cytoplasm. It localises to the nucleus. Mediates dioxin toxicity and is involved in regulation of cell growth and differentiation. Represses the transcription activity of AHR by competing with this transcription factor for heterodimer formation with the ARNT and subsequently binding to the xenobiotic response element (XRE) sequence present in the promoter regulatory region of variety of genes. Represses CYP1A1 by binding the XRE sequence and recruiting ANKRA2, HDAC4 and/or HDAC5. Autoregulates its expression by associating with its own XRE site. The protein is Aryl hydrocarbon receptor repressor (Ahrr) of Rattus norvegicus (Rat).